Reading from the N-terminus, the 269-residue chain is Protein IAL1 (269 aa).

The region spanning 32 to 133 is the LOB domain; the sequence is SPCAACKFLR…QDLARAKYEL (102 aa).

It belongs to the LOB domain-containing protein family. As to expression, expressed in leaves, leaf primordia, immature ears, immature tassels, whole ovules, silk and husk leaves.

It is found in the nucleus. The protein is Protein IAL1 of Zea mays (Maize).